Reading from the N-terminus, the 236-residue chain is Small ribosomal subunit protein uS2c (236 aa).

Belongs to the universal ribosomal protein uS2 family.

It is found in the plastid. The protein localises to the chloroplast. In Gossypium barbadense (Sea Island cotton), this protein is Small ribosomal subunit protein uS2c (rps2).